The chain runs to 184 residues: Flavin prenyltransferase UbiX (184 aa).

FMN-binding positions include 9–11, Ser-34, 85–88, and Arg-120; these read GAS and SMKT. 2 residues coordinate dimethylallyl phosphate: Tyr-150 and Arg-166.

The protein belongs to the UbiX/PAD1 family.

It catalyses the reaction dimethylallyl phosphate + FMNH2 = prenylated FMNH2 + phosphate. Functionally, flavin prenyltransferase that catalyzes the synthesis of the prenylated FMN cofactor (prenyl-FMN) for 4-hydroxy-3-polyprenylbenzoic acid decarboxylase UbiD. The prenyltransferase is metal-independent and links a dimethylallyl moiety from dimethylallyl monophosphate (DMAP) to the flavin N5 and C6 atoms of FMN. In Methanocaldococcus jannaschii (strain ATCC 43067 / DSM 2661 / JAL-1 / JCM 10045 / NBRC 100440) (Methanococcus jannaschii), this protein is Flavin prenyltransferase UbiX.